Here is a 330-residue protein sequence, read N- to C-terminus: Ferredoxin--NADP reductase (330 aa).

FAD contacts are provided by glutamate 35, glutamine 43, tyrosine 48, valine 90, phenylalanine 123, aspartate 285, and threonine 326.

The protein belongs to the ferredoxin--NADP reductase type 2 family. In terms of assembly, homodimer. The cofactor is FAD.

It catalyses the reaction 2 reduced [2Fe-2S]-[ferredoxin] + NADP(+) + H(+) = 2 oxidized [2Fe-2S]-[ferredoxin] + NADPH. The protein is Ferredoxin--NADP reductase of Streptococcus pyogenes serotype M2 (strain MGAS10270).